We begin with the raw amino-acid sequence, 706 residues long: K(+)-insensitive pyrophosphate-energized proton pump (706 aa).

The next 5 membrane-spanning stretches (helical) occupy residues 1–21 (MTAL…AIWA), 62–82 (VVIF…GFAI), 83–103 (GAIL…RANV), 129–149 (LLVA…LIHF), and 164–184 (VALG…GGIF). Residue Lys186 coordinates substrate. Positions 189, 193, 216, and 219 each coordinate Mg(2+). 6 consecutive transmembrane segments (helical) span residues 231–251 (LFET…IFFG), 263–283 (TLPL…TFFV), 300–320 (IATG…LIGF), 330–350 (GLAL…IIWI), 393–413 (IVII…GIAI), and 414–434 (ATTT…FGPV). Asp436 serves as a coordination point for Mg(2+). A run of 4 helical transmembrane segments spans residues 467–487 (AVTK…LFAA), 516–536 (YVVV…AMGM), 585–605 (IIPS…IYAI), and 616–636 (AFSA…FVAI). Ca(2+)-binding residues include Asp646, Asp672, and Asp676. A substrate-binding site is contributed by Lys679. Residues 685–705 (AVNPMIKITNIVALLLLAILA) traverse the membrane as a helical segment.

The protein belongs to the H(+)-translocating pyrophosphatase (TC 3.A.10) family. K(+)-insensitive subfamily. As to quaternary structure, homodimer. The cofactor is Mg(2+).

The protein resides in the cell inner membrane. The enzyme catalyses diphosphate + H2O + H(+)(in) = 2 phosphate + 2 H(+)(out). Functionally, proton pump that utilizes the energy of pyrophosphate hydrolysis as the driving force for proton movement across the membrane. Generates a proton motive force. This is K(+)-insensitive pyrophosphate-energized proton pump from Rhodopseudomonas palustris (strain ATCC BAA-98 / CGA009).